A 488-amino-acid chain; its full sequence is uncharacterized protein (488 aa).

This sequence belongs to the IIV-6 467R family.

This is an uncharacterized protein from Invertebrate iridescent virus 3 (IIV-3).